A 306-amino-acid polypeptide reads, in one-letter code: Ornithine carbamoyltransferase (306 aa).

Residues 50-53, Gln-77, Arg-101, and 128-131 each bind carbamoyl phosphate; these read STRT and HPCQ. L-ornithine-binding positions include Asn-160, Asp-224, and 228–229; that span reads SM. Residues 264 to 265 and Arg-292 each bind carbamoyl phosphate; that span reads CL.

The protein belongs to the aspartate/ornithine carbamoyltransferase superfamily. OTCase family.

Its subcellular location is the cytoplasm. The catalysed reaction is carbamoyl phosphate + L-ornithine = L-citrulline + phosphate + H(+). It functions in the pathway amino-acid biosynthesis; L-arginine biosynthesis; L-arginine from L-ornithine and carbamoyl phosphate: step 1/3. In terms of biological role, reversibly catalyzes the transfer of the carbamoyl group from carbamoyl phosphate (CP) to the N(epsilon) atom of ornithine (ORN) to produce L-citrulline. The chain is Ornithine carbamoyltransferase from Mycobacterium leprae (strain TN).